Consider the following 316-residue polypeptide: Ribosomal protein L11 methyltransferase (316 aa).

Residues Thr157, Gly178, Asp200, and Asn243 each contribute to the S-adenosyl-L-methionine site.

It belongs to the methyltransferase superfamily. PrmA family.

Its subcellular location is the cytoplasm. It catalyses the reaction L-lysyl-[protein] + 3 S-adenosyl-L-methionine = N(6),N(6),N(6)-trimethyl-L-lysyl-[protein] + 3 S-adenosyl-L-homocysteine + 3 H(+). Its function is as follows. Methylates ribosomal protein L11. The protein is Ribosomal protein L11 methyltransferase of Streptococcus pneumoniae (strain Hungary19A-6).